A 371-amino-acid polypeptide reads, in one-letter code: Putative RNA-binding protein Luc7-like 1 (371 aa).

Coiled-coil stretches lie at residues 87–177 and 220–256; these read MDHL…RNSM and QIRE…EERL. Over residues 232 to 257 the composition is skewed to basic and acidic residues; the sequence is VAEKQEKRNQDRLRRREEREREERLG. Residues 232-371 form a disordered region; sequence VAEKQEKRNQ…RSEEKEAGEI (140 aa). Over residues 258-317 the composition is skewed to basic residues; sequence RRSGSRTRDRRRSRSRDRRRRRSRSTSRERRKFSRSRSRDRYRRHRSRSRSHSRGHRRAS. Basic and acidic residues-rich tracts occupy residues 318–351 and 361–371; these read RDRS…DWRL and RRSEEKEAGEI. 2 positions are modified to phosphoserine: Ser336 and Ser363.

The protein belongs to the Luc7 family.

Functionally, may bind to RNA via its Arg/Ser-rich domain. This chain is Putative RNA-binding protein Luc7-like 1 (Luc7l), found in Mus musculus (Mouse).